The following is a 106-amino-acid chain: Small ribosomal subunit protein uS10 (106 aa).

It belongs to the universal ribosomal protein uS10 family. Part of the 30S ribosomal subunit.

In terms of biological role, involved in the binding of tRNA to the ribosomes. This is Small ribosomal subunit protein uS10 from Prochlorococcus marinus (strain MIT 9312).